The primary structure comprises 40 residues: APLLVELPNGKLRGRDNEGYYEAELIPKADPPVGDLAFKD.

It belongs to the type-B carboxylesterase/lipase family.

It catalyses the reaction a carboxylic ester + H2O = an alcohol + a carboxylate + H(+). The sequence is that of Esterase-4 (Est-4) from Drosophila mojavensis (Fruit fly).